A 168-amino-acid chain; its full sequence is Type-2 ice-structuring protein (168 aa).

Residues 1–17 (MLTVSLLVCAMMALTQA) form the signal peptide. Positions 18–34 (DHDGVLKGTATEAGEVS) are excised as a propeptide. Cystine bridges form between cysteine 45/cysteine 56, cysteine 73/cysteine 163, cysteine 107/cysteine 138, cysteine 127/cysteine 149, and cysteine 139/cysteine 155. The 113-residue stretch at 52 to 164 (HGQRCFYSEA…CPASHASICA (113 aa)) folds into the C-type lectin domain.

It is found in the secreted. Functionally, has antifreeze activity to protect fish blood from freezing at subzero sea water temperatures. Binds to ice crystals and inhibits their growth. The thermal hysteresis (TH) activity, the ability to lower the blood freezing point, is approximately 0.45 degrees Celsius at 0.15 mM for this protein. This Brachyopsis segaliensis (Sea poacher) protein is Type-2 ice-structuring protein.